Consider the following 127-residue polypeptide: Small ribosomal subunit protein uS11 (127 aa).

This sequence belongs to the universal ribosomal protein uS11 family. Part of the 30S ribosomal subunit.

Functionally, located on the platform of the 30S subunit. This Natronomonas pharaonis (strain ATCC 35678 / DSM 2160 / CIP 103997 / JCM 8858 / NBRC 14720 / NCIMB 2260 / Gabara) (Halobacterium pharaonis) protein is Small ribosomal subunit protein uS11.